Here is a 162-residue protein sequence, read N- to C-terminus: Translocator protein 2 (162 aa).

5 helical membrane-spanning segments follow: residues 3–23, 44–64, 79–99, 103–123, and 129–149; these read LQGP…CMLI, VILL…YLVW, LGLY…FLAA, GLAL…VFIW, and LAAL…AITY.

Belongs to the TspO/BZRP family. As to quaternary structure, homotetramer. May also form homodimer. Expressed in liver, bone marrow and spleen. In spleen, detected in red pulp but not in white pulp.

The protein resides in the endoplasmic reticulum membrane. It localises to the cell membrane. Cholesterol-binding protein involved in the redistribution of cholesterol from lipid droplets to the endoplasmic reticulum. Required to meet cholesterol demands during erythropoietic differentiation. May play a role in transport processes at the plasma membrane of erythrocytes, including regulating VDAC-mediated ATP export, and import of the heme precursors protoporphyrin IX and 5-aminolevulinic acid. This chain is Translocator protein 2 (Tspo2), found in Mus musculus (Mouse).